The following is a 301-amino-acid chain: uncharacterized protein (301 aa).

The protein belongs to the asfivirus E301R family. Interacts with host IRF3.

Plays a role in the inhibition of host innate immune system by acting as a negatively regulator of type I interferon production. Mechanistically, interacts with and prevents host IRF3 nuclear localization to inhibit its transcriptional activity. This is an uncharacterized protein from African swine fever virus (isolate Tick/South Africa/Pretoriuskop Pr4/1996) (ASFV).